The following is a 579-amino-acid chain: Proteasome-associated ATPase (579 aa).

Residues 1–21 are disordered; sequence MPRDETPEREHAEQQSRQALE. Residues 8-86 are a coiled coil; it reads EREHAEQQSR…REEVEKLTQP (79 aa). An ATP-binding site is contributed by 268–273; sequence GCGKTL. A docks into pockets in the proteasome alpha-ring region spans residues 578-579; the sequence is YL.

This sequence belongs to the AAA ATPase family. Homohexamer. Assembles into a hexameric ring structure that caps the 20S proteasome core. Strongly interacts with the prokaryotic ubiquitin-like protein Pup through a hydrophobic interface; the interacting region of ARC lies in its N-terminal coiled-coil domain. There is one Pup binding site per ARC hexamer ring. Upon ATP-binding, the C-terminus of ARC interacts with the alpha-rings of the proteasome core, possibly by binding to the intersubunit pockets.

The protein operates within protein degradation; proteasomal Pup-dependent pathway. ATPase which is responsible for recognizing, binding, unfolding and translocation of pupylated proteins into the bacterial 20S proteasome core particle. May be essential for opening the gate of the 20S proteasome via an interaction with its C-terminus, thereby allowing substrate entry and access to the site of proteolysis. Thus, the C-termini of the proteasomal ATPase may function like a 'key in a lock' to induce gate opening and therefore regulate proteolysis. This is Proteasome-associated ATPase from Acidimicrobium ferrooxidans (strain DSM 10331 / JCM 15462 / NBRC 103882 / ICP).